A 448-amino-acid chain; its full sequence is Phosphoglucosamine mutase (448 aa).

The Phosphoserine intermediate role is filled by serine 100. Residues serine 100, aspartate 240, aspartate 242, and aspartate 244 each coordinate Mg(2+). Serine 100 bears the Phosphoserine mark.

Belongs to the phosphohexose mutase family. Requires Mg(2+) as cofactor. Post-translationally, activated by phosphorylation.

It carries out the reaction alpha-D-glucosamine 1-phosphate = D-glucosamine 6-phosphate. In terms of biological role, catalyzes the conversion of glucosamine-6-phosphate to glucosamine-1-phosphate. This chain is Phosphoglucosamine mutase, found in Alkaliphilus metalliredigens (strain QYMF).